A 736-amino-acid polypeptide reads, in one-letter code: Phosphoribosylformylglycinamidine synthase subunit PurL (736 aa).

H49 is a catalytic residue. Y52 and K91 together coordinate ATP. Mg(2+) is bound at residue E93. Substrate is bound by residues 94–97 (SHNH) and R116. H95 acts as the Proton acceptor in catalysis. D117 contributes to the Mg(2+) binding site. Q240 serves as a coordination point for substrate. A Mg(2+)-binding site is contributed by D268. Position 312 to 314 (312 to 314 (ESQ)) interacts with substrate. ATP is bound by residues D493 and G530. Mg(2+) is bound at residue N531. Residue S533 coordinates substrate.

It belongs to the FGAMS family. As to quaternary structure, monomer. Part of the FGAM synthase complex composed of 1 PurL, 1 PurQ and 2 PurS subunits.

It is found in the cytoplasm. It catalyses the reaction N(2)-formyl-N(1)-(5-phospho-beta-D-ribosyl)glycinamide + L-glutamine + ATP + H2O = 2-formamido-N(1)-(5-O-phospho-beta-D-ribosyl)acetamidine + L-glutamate + ADP + phosphate + H(+). Its pathway is purine metabolism; IMP biosynthesis via de novo pathway; 5-amino-1-(5-phospho-D-ribosyl)imidazole from N(2)-formyl-N(1)-(5-phospho-D-ribosyl)glycinamide: step 1/2. Its function is as follows. Part of the phosphoribosylformylglycinamidine synthase complex involved in the purines biosynthetic pathway. Catalyzes the ATP-dependent conversion of formylglycinamide ribonucleotide (FGAR) and glutamine to yield formylglycinamidine ribonucleotide (FGAM) and glutamate. The FGAM synthase complex is composed of three subunits. PurQ produces an ammonia molecule by converting glutamine to glutamate. PurL transfers the ammonia molecule to FGAR to form FGAM in an ATP-dependent manner. PurS interacts with PurQ and PurL and is thought to assist in the transfer of the ammonia molecule from PurQ to PurL. In Rhodopseudomonas palustris (strain BisB5), this protein is Phosphoribosylformylglycinamidine synthase subunit PurL.